The chain runs to 343 residues: ATP-dependent 6-phosphofructokinase (343 aa).

Residues G10 and 103-106 contribute to the ATP site; that span reads GEGT. E104 contributes to the Mg(2+) binding site. Residues 126-128, R163, 170-172, E223, R267, and 273-276 contribute to the substrate site; these read TID, MGR, and HVQR. D128 (proton acceptor) is an active-site residue.

It belongs to the phosphofructokinase type A (PFKA) family. Mixed-substrate PFK group III subfamily. As to quaternary structure, homodimer or homotetramer. Mg(2+) is required as a cofactor.

The protein localises to the cytoplasm. It carries out the reaction beta-D-fructose 6-phosphate + ATP = beta-D-fructose 1,6-bisphosphate + ADP + H(+). Its pathway is carbohydrate degradation; glycolysis; D-glyceraldehyde 3-phosphate and glycerone phosphate from D-glucose: step 3/4. In terms of biological role, catalyzes the phosphorylation of D-fructose 6-phosphate to fructose 1,6-bisphosphate by ATP, the first committing step of glycolysis. The sequence is that of ATP-dependent 6-phosphofructokinase from Mycobacterium leprae (strain TN).